We begin with the raw amino-acid sequence, 607 residues long: Autophagy-related protein 16-1 (607 aa).

Residues 13-43 form an interaction with ATG5 region; sequence WKRHIAEELRRRDRLQRQAFEEIILQYTKLL. A coiled-coil region spans residues 79–230; that stretch reads DSQLQEMAQL…QKELAEAAKE (152 aa). At Ser139 the chain carries Phosphoserine. The segment at 207-230 is WIPI2-binding; it reads AENEKDSRRRQARLQKELAEAAKE. The segment at 230–242 is RB1CC1-binding; the sequence is EPLPVEQDDDIEV. Residues Ser269 and Ser287 each carry the phosphoserine modification. Residues 296–299 carry the Caspase cleavage motif; that stretch reads DIMD. WD repeat units follow at residues 320–359, 364–403, 406–445, 447–484, 486–525, 532–573, and 575–607; these read AHDGEVNAVQFSPGSRLLATGGMDRRVKLWEAFGDKCEFK, GSNAGITSIEFDSAGAYLLAASNDFASRIWTVDDYRLRHT, GHSGKVLSAKFLLDNARIVSGSHDRTLKLWDLRSKVCIKT, FAGSSCNDIVCTEQCVMSGHFDKKIRFWDIRSESVVRE, ELLGKITALDLNPERTELLSCSRDDLLKVIDLRTNAVKQT, KCGS…KVLS, and QHSSSINAVAWAPSGLHVVSVDKGSRAVLWAQP.

It belongs to the WD repeat ATG16 family. Homodimer. Homooligomer. Heterooligomer with ATG16L2. Interacts with WIPI1. Interacts with WIPI2. Interacts with RB1CC1; the interaction is required for ULK1 complex-dependent autophagy. Interacts with ATG5. Part of the minor complex composed of 4 sets of ATG12-ATG5 and ATG16L1 (400 kDa); this complex interacts with ATG3 leading to disruption of ATG7 interaction and promotion of ATG8-like proteins lipidation. Part of the major complex composed of 8 sets of ATG12-ATG5 and ATG16L1 (800 kDa). Interacts with RAB33B (GTP- and GDP-bound forms); the complex consists of a tetramer where two RAB33B molecules bind independently one molecule of the ATG16L1 homodimer; the interaction promotes ATG12-ATG5-ATG16L1 complex recruitment to phagophores. Interacts (via WD repeats) with TMEM59; the interaction mediates unconventional autophagic activity of TMEM59. Interacts with TLR2. Interacts (via WD repeats) with MEFV. Interacts (via N-terminal) with CLTC. Interacts with NOD1. Interacts with NOD2. Interacts with TUFM. Interacts with TRIM16. Interacts (via WD repeats) with SPATA33. Interacts with Irgm1. Proteolytic cleavage by activated CASP3 leads to degradation and may regulate autophagy upon cellular stress and apoptotic stimuli. Post-translationally, phosphorylation at Ser-139 promotes association with the ATG12-ATG5 conjugate to form the ATG12-ATG5-ATG16L1 complex. As to expression, widely expressed. Expressed in the testis and sperm midpiece (at protein level). In terms of tissue distribution, expressed in liver. Highly expressed in liver. As to expression, expressed in brain.

The protein localises to the cytoplasm. It localises to the preautophagosomal structure membrane. It is found in the endosome membrane. The protein resides in the lysosome membrane. Its function is as follows. Plays an essential role in both canonical and non-canonical autophagy: interacts with ATG12-ATG5 to mediate the lipidation to ATG8 family proteins (MAP1LC3A, MAP1LC3B, MAP1LC3C, GABARAPL1, GABARAPL2 and GABARAP). Acts as a molecular hub, coordinating autophagy pathways via distinct domains that support either canonical or non-canonical signaling. During canonical autophagy, interacts with ATG12-ATG5 to mediate the conjugation of phosphatidylethanolamine (PE) to ATG8 proteins, to produce a membrane-bound activated form of ATG8. Thereby, controls the elongation of the nascent autophagosomal membrane. As part of the ATG8 conjugation system with ATG5 and ATG12, required for recruitment of LRRK2 to stressed lysosomes and induction of LRRK2 kinase activity in response to lysosomal stress. Also involved in non-canonical autophagy, a parallel pathway involving conjugation of ATG8 proteins to single membranes at endolysosomal compartments, probably by catalyzing conjugation of phosphatidylserine (PS) to ATG8. Non-canonical autophagy plays a key role in epithelial cells to limit lethal infection by influenza A (IAV) virus. Regulates mitochondrial antiviral signaling (MAVS)-dependent type I interferon (IFN-I) production. Negatively regulates NOD1- and NOD2-driven inflammatory cytokine response. Instead, promotes an autophagy-dependent antibacterial pathway together with NOD1 or NOD2. Plays a role in regulating morphology and function of Paneth cell. The chain is Autophagy-related protein 16-1 from Mus musculus (Mouse).